An 811-amino-acid chain; its full sequence is Elongation factor G, mitochondrial (811 aa).

Residues 1-64 (MSAIARAAAR…FQQSFQRRWA (64 aa)) constitute a mitochondrion transit peptide. The tr-type G domain maps to 96-394 (RRQRNVGISA…GVCAYLPNPS (299 aa)). GTP is bound by residues 105–112 (AHIDSGKT), 192–196 (DTPGH), and 246–249 (NKMD).

This sequence belongs to the TRAFAC class translation factor GTPase superfamily. Classic translation factor GTPase family. EF-G/EF-2 subfamily.

It localises to the mitochondrion. It functions in the pathway protein biosynthesis; polypeptide chain elongation. Mitochondrial GTPase that catalyzes the GTP-dependent ribosomal translocation step during translation elongation. During this step, the ribosome changes from the pre-translocational (PRE) to the post-translocational (POST) state as the newly formed A-site-bound peptidyl-tRNA and P-site-bound deacylated tRNA move to the P and E sites, respectively. Catalyzes the coordinated movement of the two tRNA molecules, the mRNA and conformational changes in the ribosome. The protein is Elongation factor G, mitochondrial of Cryptococcus neoformans var. neoformans serotype D (strain B-3501A) (Filobasidiella neoformans).